The following is a 60-amino-acid chain: UPF0434 protein YPA_0693 (60 aa).

It belongs to the UPF0434 family.

In Yersinia pestis bv. Antiqua (strain Antiqua), this protein is UPF0434 protein YPA_0693.